We begin with the raw amino-acid sequence, 764 residues long: Mitogen-activated protein kinase kinase kinase 1b (764 aa).

Disordered stretches follow at residues 1–81 (MVEE…IQQQ), 120–260 (KSIA…TATR), 325–348 (PNLA…SSAM), and 360–392 (VPEL…HYGS). Residues 14–30 (GSWGSGEDGGSSHGGKG) show a composition bias toward gly residues. 2 stretches are compositionally biased toward low complexity: residues 60–76 (VHST…LSKS) and 125–135 (SQPLSSPSLSQ). The span at 136–145 (EHGEASHSND) shows a compositional bias: basic and acidic residues. Over residues 184–201 (YVNSQPQNHYGRKNSPSQ) the composition is skewed to polar residues. The region spanning 431–684 (WFKGDFIGSG…CDMLLTHPFI (254 aa)) is the Protein kinase domain. ATP contacts are provided by residues 437-445 (IGSGTFGSV) and K459. Residue D554 is the Proton acceptor of the active site. The tract at residues 706–764 (EERSIDVSESPSIATSSQSGSSPSVAGDAVSPASVAVRPRSMRTLRSEFSMSSPESIAS) is disordered. Low complexity predominate over residues 715 to 729 (SPSIATSSQSGSSPS). The span at 752 to 764 (SEFSMSSPESIAS) shows a compositional bias: polar residues.

Belongs to the protein kinase superfamily. STE Ser/Thr protein kinase family. MAP kinase kinase kinase subfamily.

The protein localises to the cell membrane. The enzyme catalyses L-seryl-[protein] + ATP = O-phospho-L-seryl-[protein] + ADP + H(+). It carries out the reaction L-threonyl-[protein] + ATP = O-phospho-L-threonyl-[protein] + ADP + H(+). In terms of biological role, the CERK1, MEKK1a/b, MKK1a/b/c and MPK4a/b proteins are involved in pathogen defense. The pathway induces rapid growth inhibition, cell wall depositions and accumulation of defense-related transcripts. This protein is required for responses to chitin and acts redundantly with MEKK1a. This is Mitogen-activated protein kinase kinase kinase 1b (MEKK1b) from Physcomitrium patens (Spreading-leaved earth moss).